Reading from the N-terminus, the 120-residue chain is Aspartate 1-decarboxylase (120 aa).

Ser-25 serves as the catalytic Schiff-base intermediate with substrate; via pyruvic acid. Ser-25 carries the pyruvic acid (Ser) modification. Residue Thr-57 coordinates substrate. Tyr-58 acts as the Proton donor in catalysis. Residue 73–75 (GAA) coordinates substrate.

It belongs to the PanD family. As to quaternary structure, heterooctamer of four alpha and four beta subunits. Pyruvate serves as cofactor. Post-translationally, is synthesized initially as an inactive proenzyme, which is activated by self-cleavage at a specific serine bond to produce a beta-subunit with a hydroxyl group at its C-terminus and an alpha-subunit with a pyruvoyl group at its N-terminus.

The protein resides in the cytoplasm. The catalysed reaction is L-aspartate + H(+) = beta-alanine + CO2. It participates in cofactor biosynthesis; (R)-pantothenate biosynthesis; beta-alanine from L-aspartate: step 1/1. Catalyzes the pyruvoyl-dependent decarboxylation of aspartate to produce beta-alanine. In Cupriavidus necator (strain ATCC 17699 / DSM 428 / KCTC 22496 / NCIMB 10442 / H16 / Stanier 337) (Ralstonia eutropha), this protein is Aspartate 1-decarboxylase.